An 89-amino-acid chain; its full sequence is Large ribosomal subunit protein eL34 (89 aa).

Positions 45-71 (GIPRGRPVEMRKLPKTKKRPERPMPHL) are disordered.

The protein belongs to the eukaryotic ribosomal protein eL34 family. In terms of assembly, part of the 50S ribosomal subunit.

In Pyrococcus furiosus (strain ATCC 43587 / DSM 3638 / JCM 8422 / Vc1), this protein is Large ribosomal subunit protein eL34.